Consider the following 422-residue polypeptide: Histidinol dehydrogenase (422 aa).

Positions 123, 183, and 206 each coordinate NAD(+). Substrate contacts are provided by Ser-229, Gln-251, and His-254. Residues Gln-251 and His-254 each contribute to the Zn(2+) site. Catalysis depends on proton acceptor residues Glu-320 and His-321. Substrate is bound by residues His-321, Asp-354, Glu-408, and His-413. Asp-354 serves as a coordination point for Zn(2+). His-413 provides a ligand contact to Zn(2+).

This sequence belongs to the histidinol dehydrogenase family. It depends on Zn(2+) as a cofactor.

The enzyme catalyses L-histidinol + 2 NAD(+) + H2O = L-histidine + 2 NADH + 3 H(+). It functions in the pathway amino-acid biosynthesis; L-histidine biosynthesis; L-histidine from 5-phospho-alpha-D-ribose 1-diphosphate: step 9/9. Catalyzes the sequential NAD-dependent oxidations of L-histidinol to L-histidinaldehyde and then to L-histidine. The sequence is that of Histidinol dehydrogenase from Natronomonas pharaonis (strain ATCC 35678 / DSM 2160 / CIP 103997 / JCM 8858 / NBRC 14720 / NCIMB 2260 / Gabara) (Halobacterium pharaonis).